Reading from the N-terminus, the 138-residue chain is Large ribosomal subunit protein uL16 (138 aa).

This sequence belongs to the universal ribosomal protein uL16 family. Part of the 50S ribosomal subunit.

Binds 23S rRNA and is also seen to make contacts with the A and possibly P site tRNAs. The chain is Large ribosomal subunit protein uL16 from Chlamydia felis (strain Fe/C-56) (Chlamydophila felis).